We begin with the raw amino-acid sequence, 208 residues long: 3-demethoxyubiquinol 3-hydroxylase (208 aa).

Fe cation contacts are provided by Glu-57, Glu-87, His-90, Glu-139, Glu-171, and His-174.

The protein belongs to the COQ7 family. Fe cation is required as a cofactor.

It localises to the cell membrane. It catalyses the reaction a 5-methoxy-2-methyl-3-(all-trans-polyprenyl)benzene-1,4-diol + AH2 + O2 = a 3-demethylubiquinol + A + H2O. Its pathway is cofactor biosynthesis; ubiquinone biosynthesis. Functionally, catalyzes the hydroxylation of 2-nonaprenyl-3-methyl-6-methoxy-1,4-benzoquinol during ubiquinone biosynthesis. This chain is 3-demethoxyubiquinol 3-hydroxylase, found in Burkholderia multivorans (strain ATCC 17616 / 249).